The chain runs to 107 residues: Putative protein RFPL3S (107 aa).

Strongly expressed in the testis and weakly in brain, placenta and pancreas.

In Homo sapiens (Human), this protein is Putative protein RFPL3S (RFPL3S).